We begin with the raw amino-acid sequence, 102 residues long: Large ribosomal subunit protein bL21 (102 aa).

Belongs to the bacterial ribosomal protein bL21 family. Part of the 50S ribosomal subunit. Contacts protein L20.

In terms of biological role, this protein binds to 23S rRNA in the presence of protein L20. This is Large ribosomal subunit protein bL21 from Agathobacter rectalis (strain ATCC 33656 / DSM 3377 / JCM 17463 / KCTC 5835 / VPI 0990) (Eubacterium rectale).